Reading from the N-terminus, the 291-residue chain is 3-methyl-2-oxobutanoate hydroxymethyltransferase (291 aa).

Polar residues predominate over residues methionine 1–proline 10. A disordered region spans residues methionine 1 to alanine 20. Aspartate 71 and aspartate 110 together coordinate Mg(2+). Residues aspartate 71–serine 72, aspartate 110, and lysine 140 contribute to the 3-methyl-2-oxobutanoate site. Glutamate 142 provides a ligand contact to Mg(2+). The active-site Proton acceptor is glutamate 208.

This sequence belongs to the PanB family. Homodecamer; pentamer of dimers. Mg(2+) serves as cofactor.

It is found in the cytoplasm. The catalysed reaction is 3-methyl-2-oxobutanoate + (6R)-5,10-methylene-5,6,7,8-tetrahydrofolate + H2O = 2-dehydropantoate + (6S)-5,6,7,8-tetrahydrofolate. Its pathway is cofactor biosynthesis; (R)-pantothenate biosynthesis; (R)-pantoate from 3-methyl-2-oxobutanoate: step 1/2. Catalyzes the reversible reaction in which hydroxymethyl group from 5,10-methylenetetrahydrofolate is transferred onto alpha-ketoisovalerate to form ketopantoate. The protein is 3-methyl-2-oxobutanoate hydroxymethyltransferase of Streptomyces coelicolor (strain ATCC BAA-471 / A3(2) / M145).